The sequence spans 278 residues: uncharacterized protein (278 aa).

Positions 1-32 (MSSASFTTKALSVLAALTAASAPLVAASPAHA) are cleaved as a signal peptide. The Peptidase S1 domain occupies 33–236 (LANARNVTGS…HAEWIAYYTG (204 aa)). A disulfide bridge connects residues C59 and C75. Active-site charge relay system residues include H74, D123, and S189.

The protein belongs to the peptidase S1 family.

Its subcellular location is the secreted. This is an uncharacterized protein from Corynebacterium glutamicum (strain R).